We begin with the raw amino-acid sequence, 37 residues long: Photosystem I reaction center subunit IX (37 aa).

A helical transmembrane segment spans residues 4–24 (FLSSAPVLLTAMMVFTAGLLI).

It belongs to the PsaJ family.

It localises to the cellular thylakoid membrane. Functionally, may help in the organization of the PsaE and PsaF subunits. This chain is Photosystem I reaction center subunit IX, found in Picosynechococcus sp. (strain ATCC 27264 / PCC 7002 / PR-6) (Agmenellum quadruplicatum).